Here is a 156-residue protein sequence, read N- to C-terminus: SsrA-binding protein (156 aa).

It belongs to the SmpB family.

It is found in the cytoplasm. Functionally, required for rescue of stalled ribosomes mediated by trans-translation. Binds to transfer-messenger RNA (tmRNA), required for stable association of tmRNA with ribosomes. tmRNA and SmpB together mimic tRNA shape, replacing the anticodon stem-loop with SmpB. tmRNA is encoded by the ssrA gene; the 2 termini fold to resemble tRNA(Ala) and it encodes a 'tag peptide', a short internal open reading frame. During trans-translation Ala-aminoacylated tmRNA acts like a tRNA, entering the A-site of stalled ribosomes, displacing the stalled mRNA. The ribosome then switches to translate the ORF on the tmRNA; the nascent peptide is terminated with the 'tag peptide' encoded by the tmRNA and targeted for degradation. The ribosome is freed to recommence translation, which seems to be the essential function of trans-translation. This Lactiplantibacillus plantarum (strain ATCC BAA-793 / NCIMB 8826 / WCFS1) (Lactobacillus plantarum) protein is SsrA-binding protein.